The chain runs to 1032 residues: UPF0182 protein sll1060 (1032 aa).

9 consecutive transmembrane segments (helical) span residues 27–49, 69–87, 144–166, 197–219, 226–248, 283–300, 321–339, 364–386, and 406–428; these read WVKG…RIYV, WQGS…FIVF, VLLP…YVFI, FSGM…IGVL, PGLV…FRLL, WWRG…LIIL, HISA…EHWL, LPVE…WLSV, and IIGL…LGGW.

It belongs to the UPF0182 family.

It is found in the cell membrane. In Synechocystis sp. (strain ATCC 27184 / PCC 6803 / Kazusa), this protein is UPF0182 protein sll1060.